A 293-amino-acid chain; its full sequence is tRNA pseudouridine synthase B (293 aa).

Aspartate 38 serves as the catalytic Nucleophile.

The protein belongs to the pseudouridine synthase TruB family. Type 1 subfamily.

The catalysed reaction is uridine(55) in tRNA = pseudouridine(55) in tRNA. In terms of biological role, responsible for synthesis of pseudouridine from uracil-55 in the psi GC loop of transfer RNAs. The polypeptide is tRNA pseudouridine synthase B (Trichormus variabilis (strain ATCC 29413 / PCC 7937) (Anabaena variabilis)).